The sequence spans 288 residues: Elongation factor Ts (288 aa).

The segment at 82–85 (TDFV) is involved in Mg(2+) ion dislocation from EF-Tu.

It belongs to the EF-Ts family.

Its subcellular location is the cytoplasm. In terms of biological role, associates with the EF-Tu.GDP complex and induces the exchange of GDP to GTP. It remains bound to the aminoacyl-tRNA.EF-Tu.GTP complex up to the GTP hydrolysis stage on the ribosome. This chain is Elongation factor Ts, found in Chlorobium luteolum (strain DSM 273 / BCRC 81028 / 2530) (Pelodictyon luteolum).